A 935-amino-acid chain; its full sequence is Disintegrin and metalloproteinase domain-containing protein 22 (935 aa).

The signal sequence occupies residues 1–24; sequence MHINGGPLASWICCVIGSIHLAHA. Positions 25–227 are excised as a propeptide; sequence STRPENGGTS…QQTRSQRKKR (203 aa). Asn-167 and Asn-210 each carry an N-linked (GlcNAc...) asparagine glycan. Residues 228–736 are Extracellular-facing; the sequence is QTRRYPRNVE…NRDEGVISTN (509 aa). Positions 241–440 constitute a Peptidase M12B domain; the sequence is KYVELMIVND…GGGACLFNKP (200 aa). 17 disulfides stabilise this stretch: Cys-351–Cys-435, Cys-394–Cys-419, Cys-396–Cys-403, Cys-449–Cys-479, Cys-460–Cys-476, Cys-462–Cys-468, Cys-475–Cys-496, Cys-487–Cys-493, Cys-492–Cys-518, Cys-505–Cys-525, Cys-512–Cys-544, Cys-537–Cys-549, Cys-556–Cys-607, Cys-571–Cys-637, Cys-585–Cys-595, Cys-602–Cys-665, and Cys-659–Cys-670. The Disintegrin domain occupies 446–533; the sequence is PPECGNGFVE…QCPANIHKLD (88 aa). The N-linked (GlcNAc...) asparagine glycan is linked to Asn-521. N-linked (GlcNAc...) asparagine glycosylation is found at Asn-609 and Asn-636. N-linked (GlcNAc...) asparagine glycosylation is present at Asn-677. The EGF-like domain maps to 677-713; it reads NFSTCLGSTNKICSGHGVCSNEVRCICDRFWTGEDCS. Disulfide bonds link Cys-681-Cys-695, Cys-689-Cys-701, and Cys-703-Cys-712. A helical transmembrane segment spans residues 737–757; sequence IIIGAIAGTILVLALVLGITA. Residues 758–935 lie on the Cytoplasmic side of the membrane; that stretch reads WGYKNYRRER…QSARLWETSI (178 aa). The interval 850–935 is disordered; sequence VSDVCENGRP…QSARLWETSI (86 aa). Residues 859 to 870 are compositionally biased toward polar residues; the sequence is PRSNSWQGNVTS. The segment covering 871–882 has biased composition (basic residues); sequence SRKKLRGKRFRP. A compositionally biased stretch (low complexity) spans 891–906; sequence SPAKSPSSSTGSIASS.

The precursor is cleaved by a furin endopeptidase. Low levels in adult tissues. Not detected in developing embryos.

It localises to the cell membrane. Its function is as follows. Probable ligand for integrin in the brain. This is a non catalytic metalloprotease-like protein. This chain is Disintegrin and metalloproteinase domain-containing protein 22 (adam22), found in Xenopus laevis (African clawed frog).